The primary structure comprises 29 residues: NADH dehydrogenase [ubiquinone] 1 beta subcomplex subunit 10 (29 aa).

The tract at residues 1 to 29 (GRKKGVQFDEGAPDDFDPNNPYKKDVAFL) is disordered.

This sequence belongs to the complex I NDUFB10 subunit family. As to quaternary structure, complex I is composed of about 45 different subunits.

The protein localises to the mitochondrion inner membrane. Accessory subunit of the mitochondrial membrane respiratory chain NADH dehydrogenase (Complex I), that is believed not to be involved in catalysis. Complex I functions in the transfer of electrons from NADH to the respiratory chain. The immediate electron acceptor for the enzyme is believed to be ubiquinone. The polypeptide is NADH dehydrogenase [ubiquinone] 1 beta subcomplex subunit 10 (Solanum tuberosum (Potato)).